The chain runs to 192 residues: Fe/S biogenesis protein NfuA (192 aa).

[4Fe-4S] cluster contacts are provided by cysteine 149 and cysteine 152.

The protein belongs to the NfuA family. Homodimer. The cofactor is [4Fe-4S] cluster.

In terms of biological role, involved in iron-sulfur cluster biogenesis. Binds a 4Fe-4S cluster, can transfer this cluster to apoproteins, and thereby intervenes in the maturation of Fe/S proteins. Could also act as a scaffold/chaperone for damaged Fe/S proteins. The protein is Fe/S biogenesis protein NfuA of Shewanella halifaxensis (strain HAW-EB4).